A 248-amino-acid polypeptide reads, in one-letter code: 2,3-bisphosphoglycerate-dependent phosphoglycerate mutase (248 aa).

Substrate is bound by residues 8 to 15, 21 to 22, Arg60, 87 to 90, Lys98, 114 to 115, and 183 to 184; these read RHGESEWN, TG, ERHY, RR, and GN. Catalysis depends on His9, which acts as the Tele-phosphohistidine intermediate. Catalysis depends on Glu87, which acts as the Proton donor/acceptor.

Belongs to the phosphoglycerate mutase family. BPG-dependent PGAM subfamily.

It carries out the reaction (2R)-2-phosphoglycerate = (2R)-3-phosphoglycerate. It participates in carbohydrate degradation; glycolysis; pyruvate from D-glyceraldehyde 3-phosphate: step 3/5. Its function is as follows. Catalyzes the interconversion of 2-phosphoglycerate and 3-phosphoglycerate. This Borrelia turicatae (strain 91E135) protein is 2,3-bisphosphoglycerate-dependent phosphoglycerate mutase.